Here is a 371-residue protein sequence, read N- to C-terminus: MAKKDYYEVLGVNRDASDEEIKKSYRKLAMKYHPDRNPDNPKAEESFKEAKEAYEVLSDEQKRAAYDQYGHAGVDPSAGPGPRQGFGNFADAFGDIFGDIFGGGGGNRRSNVYRGADLRYNMEISLEDAARRTETKIRIPVMSECETCHGSGARPGTQPVTCTTCGGHGQVRMQQGFFSVQQTCPKCHGSGKMVKEPCPSCQGAGRVKKHKTLSVKIPAGVDEGDRIRLSGEGERVNGGPPRDLYVVVHLKQHDIFQRDGGNLHCEMPISFTTAALGGEIEIPTLDGHAKMKIPPETQTGATFRLRGKGIKPLRTNDPGDLMCHVVVETPIKLTERQKELLREMEEINLQDSDKHSPRAKGWMDKVKDFFQ.

A J domain is found at 5–70 (DYYEVLGVNR…QKRAAYDQYG (66 aa)). The disordered stretch occupies residues 31–52 (KYHPDRNPDNPKAEESFKEAKE). Basic and acidic residues predominate over residues 32–52 (YHPDRNPDNPKAEESFKEAKE). A CR-type zinc finger spans residues 132–210 (RTETKIRIPV…CQGAGRVKKH (79 aa)). Zn(2+) is bound by residues C145, C148, C162, C165, C184, C187, C198, and C201. CXXCXGXG motif repeat units follow at residues 145–152 (CETCHGSG), 162–169 (CTTCGGHG), 184–191 (CPKCHGSG), and 198–205 (CPSCQGAG).

This sequence belongs to the DnaJ family. As to quaternary structure, homodimer. The cofactor is Zn(2+).

It is found in the cytoplasm. Participates actively in the response to hyperosmotic and heat shock by preventing the aggregation of stress-denatured proteins and by disaggregating proteins, also in an autonomous, DnaK-independent fashion. Unfolded proteins bind initially to DnaJ; upon interaction with the DnaJ-bound protein, DnaK hydrolyzes its bound ATP, resulting in the formation of a stable complex. GrpE releases ADP from DnaK; ATP binding to DnaK triggers the release of the substrate protein, thus completing the reaction cycle. Several rounds of ATP-dependent interactions between DnaJ, DnaK and GrpE are required for fully efficient folding. Also involved, together with DnaK and GrpE, in the DNA replication of plasmids through activation of initiation proteins. This Methylovorus sp. (strain SS1 / DSM 11726) protein is Chaperone protein DnaJ.